Reading from the N-terminus, the 115-residue chain is Putative membrane protein insertion efficiency factor (115 aa).

Belongs to the UPF0161 family.

Its subcellular location is the cell membrane. Functionally, could be involved in insertion of integral membrane proteins into the membrane. This Mycobacterium avium (strain 104) protein is Putative membrane protein insertion efficiency factor.